The chain runs to 88 residues: Small ribosomal subunit protein uS15c (88 aa).

The protein belongs to the universal ribosomal protein uS15 family. Part of the 30S ribosomal subunit.

The protein resides in the plastid. Its subcellular location is the chloroplast. The polypeptide is Small ribosomal subunit protein uS15c (rps15) (Marchantia polymorpha (Common liverwort)).